A 336-amino-acid polypeptide reads, in one-letter code: Apyrase (336 aa).

Residues 1 to 21 (MFLKFCVVAFAICLSINLSEG) form the signal peptide. Asn-209 is a glycosylation site (N-linked (GlcNAc...) asparagine).

The protein belongs to the apyrase family. Requires Ca(2+) as cofactor. Salivary gland (at protein level).

It is found in the secreted. It catalyses the reaction a ribonucleoside 5'-triphosphate + 2 H2O = a ribonucleoside 5'-phosphate + 2 phosphate + 2 H(+). Its function is as follows. Facilitates hematophagy by inhibiting ADP- and collagen-dependent platelet aggregation in the host. Cleaves adenosine triphosphate (ATP) and adenosine diphosphate (ADP) to adenosine monophosphate (AMP) and inorganic phosphate in calcium-dependent manner. This chain is Apyrase, found in Phlebotomus duboscqi (Sandfly).